The sequence spans 216 residues: Small ribosomal subunit protein uS5 (216 aa).

Positions 1–55 are disordered; that stretch reads MDKKLENQKDLLNQDPKVELNSQSVAKNPLNSREVKPIQRRRPLRKNARDKNSKP. The span at 20–31 shows a compositional bias: polar residues; the sequence is LNSQSVAKNPLN. Positions 57 to 120 constitute an S5 DRBM domain; the sequence is FEERVIAIHR…KDAQNRLVSV (64 aa).

It belongs to the universal ribosomal protein uS5 family. As to quaternary structure, part of the 30S ribosomal subunit. Contacts proteins S4 and S8.

Its function is as follows. With S4 and S12 plays an important role in translational accuracy. In terms of biological role, located at the back of the 30S subunit body where it stabilizes the conformation of the head with respect to the body. This is Small ribosomal subunit protein uS5 from Mesomycoplasma hyopneumoniae (strain 7448) (Mycoplasma hyopneumoniae).